Reading from the N-terminus, the 442-residue chain is UDP-N-acetylmuramate--L-alanine ligase (442 aa).

Residue Gly109 to Ser115 coordinates ATP.

It belongs to the MurCDEF family.

Its subcellular location is the cytoplasm. The catalysed reaction is UDP-N-acetyl-alpha-D-muramate + L-alanine + ATP = UDP-N-acetyl-alpha-D-muramoyl-L-alanine + ADP + phosphate + H(+). It functions in the pathway cell wall biogenesis; peptidoglycan biosynthesis. Functionally, cell wall formation. The polypeptide is UDP-N-acetylmuramate--L-alanine ligase (Streptococcus pyogenes serotype M6 (strain ATCC BAA-946 / MGAS10394)).